Here is a 272-residue protein sequence, read N- to C-terminus: Merozoite surface protein 2 (272 aa).

The N-terminal stretch at M1 to I20 is a signal peptide. 2 N-linked (GlcNAc...) asparagine glycosylation sites follow: N22 and N36. Residues A44 to S198 are polymorphic region. Positions E45–N233 are disordered. The span at G51–N82 shows a compositional bias: gly residues. A run of 6 repeats spans residues G53–A56, G57–A60, G61–A64, G65–A68, G69–A72, and G73–A76. Residues G53 to A76 are 6 X 4 AA tandem repeats of G-G-S-A. Low complexity predominate over residues G83–S119. Residues P122–V137 show a composition bias toward basic and acidic residues. Polar residues-rich tracts occupy residues E139–P165 and K172–P200. Residue N149 is glycosylated (N-linked (GlcNAc...) asparagine). The N-linked (GlcNAc...) asparagine glycan is linked to N221. A disulfide bridge connects residues C229 and C237. N245 and N246 each carry an N-linked (GlcNAc...) asparagine glycan. The GPI-anchor amidated asparagine moiety is linked to residue N246. Positions S247–I272 are cleaved as a propeptide — removed in mature form.

The protein resides in the cell membrane. May play a role in the merozoite attachment to the erythrocyte. In Plasmodium falciparum (isolate 3D7), this protein is Merozoite surface protein 2.